Consider the following 414-residue polypeptide: Gamma-glutamyl phosphate reductase (414 aa).

This sequence belongs to the gamma-glutamyl phosphate reductase family.

It localises to the cytoplasm. The enzyme catalyses L-glutamate 5-semialdehyde + phosphate + NADP(+) = L-glutamyl 5-phosphate + NADPH + H(+). Its pathway is amino-acid biosynthesis; L-proline biosynthesis; L-glutamate 5-semialdehyde from L-glutamate: step 2/2. Functionally, catalyzes the NADPH-dependent reduction of L-glutamate 5-phosphate into L-glutamate 5-semialdehyde and phosphate. The product spontaneously undergoes cyclization to form 1-pyrroline-5-carboxylate. This is Gamma-glutamyl phosphate reductase from Thermoanaerobacter sp. (strain X514).